A 564-amino-acid polypeptide reads, in one-letter code: NAD-dependent malic enzyme (564 aa).

The active-site Proton donor is the Tyr-102. Residue Arg-155 coordinates NAD(+). The Proton acceptor role is filled by Lys-173. Positions 244, 245, and 268 each coordinate a divalent metal cation. Positions 268 and 417 each coordinate NAD(+).

Belongs to the malic enzymes family. Homotetramer. Mg(2+) is required as a cofactor. Mn(2+) serves as cofactor.

It catalyses the reaction (S)-malate + NAD(+) = pyruvate + CO2 + NADH. It carries out the reaction oxaloacetate + H(+) = pyruvate + CO2. The protein is NAD-dependent malic enzyme of Pseudomonas aeruginosa (strain LESB58).